Reading from the N-terminus, the 486-residue chain is uncharacterized protein (486 aa).

The N-terminal stretch at 1–25 (MGTMRSVYLIIIIILFFAFISLSFG) is a signal peptide. Basic and acidic residues-rich tracts occupy residues 306–316 (KKEEKENEESS) and 326–349 (KKEEKSQTQETKKPSKNEMNKQEK). A disordered region spans residues 306–349 (KKEEKENEESSKTINQMQRHKKEEKSQTQETKKPSKNEMNKQEK).

This is an uncharacterized protein from Methanocaldococcus jannaschii (strain ATCC 43067 / DSM 2661 / JAL-1 / JCM 10045 / NBRC 100440) (Methanococcus jannaschii).